A 266-amino-acid chain; its full sequence is Lectin 7 (266 aa).

A signal peptide spans 1–27; the sequence is MAINTSRTQILFITIISFLILAQNVNS. N-linked (GlcNAc...) asparagine glycans are attached at residues Asn-121, Asn-205, and Asn-219.

Belongs to the leguminous lectin family.

May be involved in arbuscular mycorrhizal (AM) symbiosis with AM fungi. This Medicago truncatula (Barrel medic) protein is Lectin 7.